The primary structure comprises 330 residues: Diacylglycerol O-acyltransferase 2 (330 aa).

The next 2 helical transmembrane spans lie at 15 to 35 (LETMAVAIYAMVLPVCLIMAF) and 37 to 57 (LIVIPLFWGIAIPYLVWMFYF).

It belongs to the diacylglycerol acyltransferase family.

It is found in the endoplasmic reticulum membrane. The enzyme catalyses an acyl-CoA + a 1,2-diacyl-sn-glycerol = a triacyl-sn-glycerol + CoA. It catalyses the reaction all-trans-retinol + an acyl-CoA = an all-trans-retinyl ester + CoA. It carries out the reaction 2-(9Z-octadecenoyl)-glycerol + (9Z)-octadecenoyl-CoA = 1,2-di-(9Z-octadecenoyl)-sn-glycerol + CoA. The catalysed reaction is 1,2-di-(9Z-octadecenoyl)-sn-glycerol + (9Z)-octadecenoyl-CoA = 1,2,3-tri-(9Z-octadecenoyl)-glycerol + CoA. The enzyme catalyses all-trans-retinol + hexadecanoyl-CoA = all-trans-retinyl hexadecanoate + CoA. It catalyses the reaction 1-O-(9Z-octadecenyl)-glycerol + (9Z)-octadecenoyl-CoA = 1-O-(9Z-octadecyl)-3-(9Z-octadecenoyl)-glycerol + CoA. It carries out the reaction 1-(9Z-octadecenoyl)-glycerol + (9Z)-octadecenoyl-CoA = 1,2-di-(9Z-octadecenoyl)-glycerol + CoA. The catalysed reaction is 1,2-di-(9Z-octadecenoyl)-sn-glycerol + hexadecanoyl-CoA = 1,2-di-(9Z)-octadecenoyl-3-hexadecanoyl-sn-glycerol + CoA. The enzyme catalyses 1,3-di-(9Z-octadecenoyl)-glycerol + (9Z)-octadecenoyl-CoA = 1,2,3-tri-(9Z-octadecenoyl)-glycerol + CoA. It catalyses the reaction 2,3-di-(9Z)-octadecenoyl-sn-glycerol + (9Z)-octadecenoyl-CoA = 1,2,3-tri-(9Z-octadecenoyl)-glycerol + CoA. It carries out the reaction 2-(9Z-octadecenoyl)-glycerol + hexadecanoyl-CoA = 1-hexadecanoyl-2-(9Z-octadecenoyl)-sn-glycerol + CoA. Its pathway is glycerolipid metabolism; triacylglycerol biosynthesis. In terms of biological role, catalyzes the terminal and only committed step in triacylglycerol synthesis by using diacylglycerol and fatty acyl CoA as substrates. Required for storage lipid synthesis. In Dictyostelium discoideum (Social amoeba), this protein is Diacylglycerol O-acyltransferase 2 (dgat2).